A 426-amino-acid polypeptide reads, in one-letter code: Actin-like protein 6B (426 aa).

An essential for mediating its function in dendritic development; may contribute to neuronal-specific targeting region spans residues Thr39 to Met82.

This sequence belongs to the actin family. As to quaternary structure, component of the multiprotein chromatin-remodeling complexes SWI/SNF: SWI/SNF-A (BAF), SWI/SNF-B (PBAF) and related complexes. The canonical complex contains a catalytic subunit (either SMARCA4/BRG1/BAF190A or SMARCA2/BRM/BAF190B) and at least SMARCE1, ACTL6A/BAF53, SMARCC1/BAF155, SMARCC2/BAF170, and SMARCB1/SNF5/BAF47. Other subunits specific to each of the complexes may also be present permitting several possible combinations developmentally and tissue specific. Component of the BAF complex, which includes at least actin (ACTB), ARID1A/BAF250A, ARID1B/BAF250B, SMARCA2/BRM, SMARCA4/BRG1/BAF190A, ACTL6A/BAF53, ACTL6B/BAF53B, SMARCE1/BAF57, SMARCC1/BAF155, SMARCC2/BAF170, SMARCB1/SNF5/INI1, and one or more SMARCD1/BAF60A, SMARCD2/BAF60B, or SMARCD3/BAF60C. Component of neuron-specific chromatin remodeling complex (nBAF complex) composed of at least, ARID1A/BAF250A or ARID1B/BAF250B, SMARCD1/BAF60A or SMARCD2/BAF60B or SMARCD3/BAF60C, SMARCA2/BRM/BAF190B, SMARCA4/BRG1/BAF190A, SMARCB1/BAF47, SMARCC1/BAF155, SMARCE1/BAF57, SMARCC2/BAF170, DPF1/BAF45B, DPF3/BAF45C, ACTL6B/BAF53B and actin (ACTB). Note that the nBAF complex is polymorphic in regard to the ATPase, SMARCA2 and SMARCA4 occupying mutually exclusive positions. May be a component of the SWI/SNF-B (PBAF) chromatin remodeling complex, at least composed of SMARCA4/BRG1, SMARCB1/BAF47/SNF5, ACTL6A/BAF53A or ACTL6B/BAF53B, SMARCE1/BAF57, SMARCD1/BAF60A, SMARCD2/BAF60B, perhaps SMARCD3/BAF60C, SMARCC1/BAF155, SMARCC2/BAF170, PBRM1/BAF180, ARID2/BAF200 and actin.

The protein resides in the nucleus. In terms of biological role, involved in transcriptional activation and repression of select genes by chromatin remodeling (alteration of DNA-nucleosome topology). Component of SWI/SNF chromatin remodeling complexes that carry out key enzymatic activities, changing chromatin structure by altering DNA-histone contacts within a nucleosome in an ATP-dependent manner. Belongs to the neuron-specific chromatin remodeling complex (nBAF complex), as such plays a role in remodeling mononucleosomes in an ATP-dependent fashion, and is required for postmitotic neural development and dendritic outgrowth. During neural development a switch from a stem/progenitor to a postmitotic chromatin remodeling mechanism occurs as neurons exit the cell cycle and become committed to their adult state. The transition from proliferating neural stem/progenitor cells to postmitotic neurons requires a switch in subunit composition of the npBAF and nBAF complexes. As neural progenitors exit mitosis and differentiate into neurons, npBAF complexes which contain ACTL6A/BAF53A and PHF10/BAF45A, are exchanged for homologous alternative ACTL6B/BAF53B and DPF1/BAF45B or DPF3/BAF45C subunits in neuron-specific complexes (nBAF). The npBAF complex is essential for the self-renewal/proliferative capacity of the multipotent neural stem cells. The nBAF complex along with CREST plays a role regulating the activity of genes essential for dendrite growth. ACTL6B/BAF53B is not essential for assembly of the nBAF complex but is required for targeting the complex and CREST to the promoter of genes essential for dendritic growth. Essential for neuronal maturation and dendrite development. This chain is Actin-like protein 6B (ACTL6B), found in Bos taurus (Bovine).